Consider the following 328-residue polypeptide: Probable tRNA pseudouridine synthase B (328 aa).

The Nucleophile role is filled by D71. The 76-residue stretch at 238 to 313 folds into the PUA domain; it reads LPKIWVRDSA…LVARVDRVIM (76 aa).

The protein belongs to the pseudouridine synthase TruB family. Type 2 subfamily.

It carries out the reaction uridine(55) in tRNA = pseudouridine(55) in tRNA. Functionally, could be responsible for synthesis of pseudouridine from uracil-55 in the psi GC loop of transfer RNAs. This chain is Probable tRNA pseudouridine synthase B, found in Pyrobaculum islandicum (strain DSM 4184 / JCM 9189 / GEO3).